Here is a 127-residue protein sequence, read N- to C-terminus: Secreted RxLR effector protein 7 (127 aa).

Residues 1–21 form the signal peptide; the sequence is MRSAYYVLTALLVVASSQVAA. The short motif at 48 to 65 is the RxLR-dEER element; the sequence is RFLRESRDVHGNVANEER.

The protein belongs to the RxLR effector family.

The protein localises to the secreted. It is found in the host nucleus. The protein resides in the host cytoplasm. Functionally, secreted effector that completely suppresses the host cell death induced by cell death-inducing proteins. This Plasmopara viticola (Downy mildew of grapevine) protein is Secreted RxLR effector protein 7.